We begin with the raw amino-acid sequence, 205 residues long: Protein GrpE (205 aa).

The interval 1–40 is disordered; that stretch reads MSRKLHEEELTPEGMDAAQNADPAGDPVSENEGALPAAEP.

The protein belongs to the GrpE family. Homodimer.

The protein localises to the cytoplasm. Functionally, participates actively in the response to hyperosmotic and heat shock by preventing the aggregation of stress-denatured proteins, in association with DnaK and GrpE. It is the nucleotide exchange factor for DnaK and may function as a thermosensor. Unfolded proteins bind initially to DnaJ; upon interaction with the DnaJ-bound protein, DnaK hydrolyzes its bound ATP, resulting in the formation of a stable complex. GrpE releases ADP from DnaK; ATP binding to DnaK triggers the release of the substrate protein, thus completing the reaction cycle. Several rounds of ATP-dependent interactions between DnaJ, DnaK and GrpE are required for fully efficient folding. In Acidobacterium capsulatum (strain ATCC 51196 / DSM 11244 / BCRC 80197 / JCM 7670 / NBRC 15755 / NCIMB 13165 / 161), this protein is Protein GrpE.